The sequence spans 67 residues: MKLLLLTLTVLLLLSQLTPGGTQRCWNLYGKCRHRCSKKERVYVYCVNNKMCCVKPKYQPKERWWRF.

A signal peptide spans 1–20 (MKLLLLTLTVLLLLSQLTPG). Disulfide bonds link Cys25–Cys52, Cys32–Cys46, and Cys36–Cys53.

This sequence belongs to the beta-defensin family.

It is found in the secreted. Its function is as follows. Has antibacterial activity. The sequence is that of Beta-defensin 123 (DEFB123) from Pongo pygmaeus (Bornean orangutan).